The primary structure comprises 74 residues: Control protein C.MunI (74 aa).

An HTH cro/C1-type domain is found at 12 to 67 (LKKLRKEKTDLSQESFAAQIDLDRTYYSSIENGKRNVSLVNLEKISAGLGITLSEL). The H-T-H motif DNA-binding region spans 23–42 (SQESFAAQIDLDRTYYSSIE).

In terms of biological role, probably controls expression of its associated restriction-modification system MunI. The chain is Control protein C.MunI from Mycoplasma sp.